Reading from the N-terminus, the 172-residue chain is VQ motif-containing protein 17 (172 aa).

Positions 51 to 60 (FREIVQNLTG) match the VQ motif. The disordered stretch occupies residues 60-97 (GKQDHHHHDLPHQKGLKRNPRSRRSHDHHEVHDMNKSH). Over residues 61–71 (KQDHHHHDLPH) the composition is skewed to basic and acidic residues. Residues 72 to 85 (QKGLKRNPRSRRSH) are compositionally biased toward basic residues. The span at 86-95 (DHHEVHDMNK) shows a compositional bias: basic and acidic residues.

The protein localises to the nucleus. Its function is as follows. May function as positive regulator of plant growth. The protein is VQ motif-containing protein 17 of Arabidopsis thaliana (Mouse-ear cress).